The following is a 170-amino-acid chain: Neurotensin/neuromedin N (170 aa).

Residues 1–23 (MMAGMKIQLVCMILLAFSSWSLC) form the signal peptide.

Belongs to the neurotensin family. In terms of assembly, interacts with NTSR1. Interacts with SORT1. Interacts with SORL1. In terms of processing, neurotensin is cleaved and degraded by Angiotensin-converting enzyme (ACE) and neprilysin (MME).

The protein resides in the secreted. Its subcellular location is the cytoplasmic vesicle. The protein localises to the secretory vesicle. Neurotensin may play an endocrine or paracrine role in the regulation of fat metabolism. It causes contraction of smooth muscle. The sequence is that of Neurotensin/neuromedin N (NTS) from Canis lupus familiaris (Dog).